The sequence spans 348 residues: MNRTDELRTARIDSLVTPTELAQRYPVSSSVASHVTDSRRRIEKILNGEDPRLLVVIGPCSIHDLNAAMEYATQLQAQRQKHQARLEIVMRTYFEKPRTVVGWKGLISDPDLNGSYRVNHGLELARRLLLQVNELGVPTATEFLDMVTGQFIADLISWGTIGARTTESQIHREMASALSCPVGFKNGTDGNTRIAVDAIRASRASHMFLSPDKDGQMTIYQTSGNPYGHIIMRGGKKPNYHAEDIAAACDTLHEFDLPEHLVVDFSHGNCQKQHRRQLDVCDDICQQIRNGSTAIAGIMAESFLREGTQKIISGQPLIYGQSITDPCLNWEDTEVLLEKLAAAVDSRF.

Belongs to the class-I DAHP synthase family.

The catalysed reaction is D-erythrose 4-phosphate + phosphoenolpyruvate + H2O = 7-phospho-2-dehydro-3-deoxy-D-arabino-heptonate + phosphate. It functions in the pathway metabolic intermediate biosynthesis; chorismate biosynthesis; chorismate from D-erythrose 4-phosphate and phosphoenolpyruvate: step 1/7. Stereospecific condensation of phosphoenolpyruvate (PEP) and D-erythrose-4-phosphate (E4P) giving rise to 3-deoxy-D-arabino-heptulosonate-7-phosphate (DAHP). The sequence is that of Phospho-2-dehydro-3-deoxyheptonate aldolase, Trp-sensitive (aroH) from Salmonella typhi.